Reading from the N-terminus, the 705-residue chain is MEAIKKVFEQKKAQDATAFVAFVTAGYPKKEDTVPVLLALQAGGADIIELGIPFSDPIADGPVIQEANTVALKNDIDYPTVLGQIREARQQGLTAPVLLMGYYNPMLAYGEDKAIQDAAEAGANGFIMVDLPPEEAIAFRQKCAASNLSYVPLIAPSTTLKRIQFLASIADSFIYVVSKMGTTGSSANVAVNEELPTILSRIREYTHVPLAVEFGVATRDQFNYVADAGADGVVVIGSRIVNAIKAAGEGQVPQFVENYCREVSGKGEPSRVRSPGAAQRTPSQLTPNAETAKGVENILPARFGQFGGQYVPESLVDALAELEEAHKSAIEDPAFWEEVRSLYTYSNRPSNLYLAENLTKEAGGANIWLKREDLNHTGSHKINNALGQILLAKRIGKTRIIAETGAGQHGVATATVCAKFGLECVIYMGAEDVRRQALKLFRIEMLGGKAWVIPVHSGSCTLKDAVNEAMRDWVTNLSTTHYLVGSAIGPHPFPTIVRDFQKVIGEEIKAQLKEVRGKLPDVVVACVGGGSNAIGTFYDFIPDKSVRLVGVEAGGEGIDGHKHSATLSMGQPGVLHGVRTYILQDKAGQIIETHSISAGLDYPGVGPEHAWLKDSGRADYVVCTDEDALRGFRMLTQKEGIIPALESSHAIWEGVKIAKSLPKDKDIVICLSGRGDKDVEQISELLPKWADKLDWHVSSNAIPSK.

Residues 1–293 (MEAIKKVFEQ…QLTPNAETAK (293 aa)) form a tryptophan synthase alpha chain region. Residues Glu-49 and Asp-60 each act as proton acceptor in the active site. The tract at residues 266 to 287 (KGEPSRVRSPGAAQRTPSQLTP) is disordered. The segment at 294-705 (GVENILPARF…HVSSNAIPSK (412 aa)) is tryptophan synthase beta chain. Lys-381 is subject to N6-(pyridoxal phosphate)lysine.

It in the N-terminal section; belongs to the TrpA family. The protein in the C-terminal section; belongs to the TrpB family. Pyridoxal 5'-phosphate serves as cofactor.

The catalysed reaction is (1S,2R)-1-C-(indol-3-yl)glycerol 3-phosphate + L-serine = D-glyceraldehyde 3-phosphate + L-tryptophan + H2O. It functions in the pathway amino-acid biosynthesis; L-tryptophan biosynthesis; L-tryptophan from chorismate: step 5/5. This is Tryptophan synthase (TRP-1) from Coprinopsis cinerea (Inky cap fungus).